The chain runs to 387 residues: Lipid-A-disaccharide synthase (387 aa).

The protein belongs to the LpxB family.

It catalyses the reaction a lipid X + a UDP-2-N,3-O-bis[(3R)-3-hydroxyacyl]-alpha-D-glucosamine = a lipid A disaccharide + UDP + H(+). The protein operates within bacterial outer membrane biogenesis; LPS lipid A biosynthesis. Its function is as follows. Condensation of UDP-2,3-diacylglucosamine and 2,3-diacylglucosamine-1-phosphate to form lipid A disaccharide, a precursor of lipid A, a phosphorylated glycolipid that anchors the lipopolysaccharide to the outer membrane of the cell. The sequence is that of Lipid-A-disaccharide synthase from Glaesserella parasuis serovar 5 (strain SH0165) (Haemophilus parasuis).